We begin with the raw amino-acid sequence, 430 residues long: Probable aspartic-type endopeptidase ARB_07403 (430 aa).

Residues 1 to 17 form the signal peptide; that stretch reads MHVSTLLVAVLLPLALS. A propeptide spans 18-87 (activation peptide); the sequence is KPTPRKKTGS…SKATAGSGKE (70 aa). A disordered region spans residues 66 to 105; it reads YHPQHISKLPGNSKATAGSGKEGVESQDEKGEVVNNPTNH. A compositionally biased stretch (basic and acidic residues) spans 87-97; it reads EGVESQDEKGE. Positions 109-427 constitute a Peptidase A1 domain; sequence FLSPVTIGGQ…DQRGPSISLA (319 aa). The active site involves Asp-125. N-linked (GlcNAc...) asparagine glycosylation occurs at Asn-306. Asp-314 is an active-site residue.

Belongs to the peptidase A1 family.

The protein resides in the secreted. Functionally, probable secreted aspartic-type endopeptidase which contributes to virulence. The sequence is that of Probable aspartic-type endopeptidase ARB_07403 from Arthroderma benhamiae (strain ATCC MYA-4681 / CBS 112371) (Trichophyton mentagrophytes).